Here is a 569-residue protein sequence, read N- to C-terminus: Proline--tRNA ligase (569 aa).

The protein belongs to the class-II aminoacyl-tRNA synthetase family. ProS type 1 subfamily. Homodimer.

It localises to the cytoplasm. It carries out the reaction tRNA(Pro) + L-proline + ATP = L-prolyl-tRNA(Pro) + AMP + diphosphate. Its function is as follows. Catalyzes the attachment of proline to tRNA(Pro) in a two-step reaction: proline is first activated by ATP to form Pro-AMP and then transferred to the acceptor end of tRNA(Pro). As ProRS can inadvertently accommodate and process non-cognate amino acids such as alanine and cysteine, to avoid such errors it has two additional distinct editing activities against alanine. One activity is designated as 'pretransfer' editing and involves the tRNA(Pro)-independent hydrolysis of activated Ala-AMP. The other activity is designated 'posttransfer' editing and involves deacylation of mischarged Ala-tRNA(Pro). The misacylated Cys-tRNA(Pro) is not edited by ProRS. The protein is Proline--tRNA ligase of Legionella pneumophila (strain Corby).